Here is a 421-residue protein sequence, read N- to C-terminus: Histone-lysine N-methyltransferase SUV39H1 (421 aa).

The Chromo domain maps to 46–104 (FEVEYLWNYKKVQDQELYLVKWKYYPDSESTWEPRHHLKCNNLLKQFHLDLERELLRRA). Positions 189–249 (AGCKCRDCFS…SCPNRVVQKG (61 aa)) constitute a Pre-SET domain. 9 residues coordinate Zn(2+): cysteine 191, cysteine 193, cysteine 196, cysteine 203, cysteine 204, cysteine 231, cysteine 235, cysteine 237, and cysteine 241. An SET domain is found at 252 to 375 (YKFCIFRTSD…TGEELTFDYN (124 aa)). Residues 263-265 (RGW), tyrosine 306, and 332-333 (NH) contribute to the S-adenosyl-L-methionine site. 4 residues coordinate Zn(2+): cysteine 335, cysteine 409, cysteine 411, and cysteine 416. The Post-SET domain occupies 405 to 421 (VRVECKCGVSSCRKYLF).

This sequence belongs to the class V-like SAM-binding methyltransferase superfamily. Histone-lysine methyltransferase family. Suvar3-9 subfamily.

The protein resides in the nucleus. Its subcellular location is the chromosome. It localises to the centromere. The catalysed reaction is L-lysyl(9)-[histone H3] + 3 S-adenosyl-L-methionine = N(6),N(6),N(6)-trimethyl-L-lysyl(9)-[histone H3] + 3 S-adenosyl-L-homocysteine + 3 H(+). Histone methyltransferase that specifically trimethylates 'Lys-9' of histone H3 using monomethylated H3 'Lys-9' as substrate. H3 'Lys-9' trimethylation represents a specific tag for epigenetic transcriptional repression by recruiting HP1 (CBX1, CBX3 and/or CBX5) proteins to methylated histones. Mainly functions in heterochromatin regions, thereby playing a central role in the establishment of constitutive heterochromatin at pericentric and telomere regions. H3 'Lys-9' trimethylation is also required to direct DNA methylation at pericentric repeats. SUV39H1 is targeted to histone H3 via its interaction with RB1 and is involved in many processes. This Xenopus laevis (African clawed frog) protein is Histone-lysine N-methyltransferase SUV39H1 (suv39h1).